Consider the following 189-residue polypeptide: Interferon alpha-D (189 aa).

An N-terminal signal peptide occupies residues 1–23; sequence MAPAWSLLLALLLLSCNAICSLG. 2 cysteine pairs are disulfide-bonded: cysteine 24–cysteine 122 and cysteine 52–cysteine 162.

It belongs to the alpha/beta interferon family.

The protein resides in the secreted. Its function is as follows. Produced by macrophages, IFN-alpha have antiviral activities. Interferon stimulates the production of two enzymes: a protein kinase and an oligoadenylate synthetase. This is Interferon alpha-D (IFNAD) from Bos taurus (Bovine).